The primary structure comprises 2347 residues: Proto-oncogene tyrosine-protein kinase ROS (2347 aa).

The N-terminal stretch at 1–27 (MKNIYCLIPKLVNFATLGCLWISVVQC) is a signal peptide. The Extracellular portion of the chain corresponds to 28 to 1859 (TVLNSCLKSC…LVGDDFWIPE (1832 aa)). Residues Asn-52, Asn-114, and Asn-123 are each glycosylated (N-linked (GlcNAc...) asparagine). 2 Fibronectin type-III domains span residues 101–196 (LPTA…VPET) and 197–285 (APLI…SSSA). N-linked (GlcNAc...) asparagine glycosylation is found at Asn-324, Asn-352, Asn-396, Asn-471, Asn-607, Asn-628, Asn-706, Asn-714, Asn-732, Asn-939, Asn-961, Asn-1015, Asn-1087, Asn-1090, Asn-1095, Asn-1211, Asn-1272, Asn-1330, Asn-1458, Asn-1461, Asn-1474, Asn-1499, Asn-1565, Asn-1669, Asn-1715, Asn-1738, and Asn-1808. The Fibronectin type-III 3 domain occupies 557–671 (LPGRPQELSV…EPSVGTTLVP (115 aa)). Fibronectin type-III domains are found at residues 947-1042 (IPDS…TVPS) and 1043-1150 (APEN…TSEI). Fibronectin type-III domains are found at residues 1450-1556 (DTVE…TKNG), 1557-1656 (VPEA…VEMF), 1658-1751 (TPEK…TKAG), and 1752-1854 (VPNK…VGDD). Residues 1860 to 1882 (TSFILTIIVGIFLVVTIPLTFVW) form a helical membrane-spanning segment. Residues 1883–2347 (HRRLKNQKSA…THSGYGDGSD (465 aa)) are Cytoplasmic-facing. The region spanning 1945 to 2222 (LTLRLLLGSG…DQLQLFRNFF (278 aa)) is the Protein kinase domain. ATP is bound by residues 1951–1959 (LGSGAFGEV) and Lys-1980. Asp-2079 serves as the catalytic Proton acceptor. A Phosphotyrosine; by autocatalysis modification is found at Tyr-2274. The interval 2284 to 2311 (GEEKSEGPLGSQESESCGLRKEEKEPHA) is disordered. Positions 2301–2311 (GLRKEEKEPHA) are enriched in basic and acidic residues. Tyr-2334 bears the Phosphotyrosine; by autocatalysis mark.

This sequence belongs to the protein kinase superfamily. Tyr protein kinase family. Insulin receptor subfamily. Interacts with PTPN6 (via SH2 1 domain); the interaction is direct and promotes ROS1 dephosphorylation. Interacts with PTPN11; may activate the PI3 kinase-mTOR signaling pathway. Interacts with VAV3; constitutive interaction mediating VAV3 phosphorylation. In terms of processing, phosphorylated. Probably autophosphorylates. Phosphorylation at Tyr-2274 is required for the interaction with PTPN6 that mediates ROS1 dephosphorylation. Phosphorylation at Tyr-2274 stimulates the kinase activity and the activation of the ERK1 signaling cascade. Phosphorylation at Tyr-2274 and/or Tyr-2334 recruits PTPN11. In terms of tissue distribution, expressed in brain. Expression is increased in primary gliomas.

Its subcellular location is the cell membrane. The catalysed reaction is L-tyrosyl-[protein] + ATP = O-phospho-L-tyrosyl-[protein] + ADP + H(+). With respect to regulation, inhibited by dephosphorylation by PTPN6. Its function is as follows. Receptor tyrosine kinase (RTK) that plays a role in epithelial cell differentiation and regionalization of the proximal epididymal epithelium. NELL2 is an endogenous ligand for ROS1. Upon endogenous stimulation by NELL2, ROS1 activates the intracellular signaling pathway and triggers epididymal epithelial differentiation and subsequent sperm maturation. May activate several downstream signaling pathways related to cell differentiation, proliferation, growth and survival including the PI3 kinase-mTOR signaling pathway. Mediates the phosphorylation of PTPN11, an activator of this pathway. May also phosphorylate and activate the transcription factor STAT3 to control anchorage-independent cell growth. Mediates the phosphorylation and the activation of VAV3, a guanine nucleotide exchange factor regulating cell morphology. May activate other downstream signaling proteins including AKT1, MAPK1, MAPK3, IRS1 and PLCG2. The polypeptide is Proto-oncogene tyrosine-protein kinase ROS (ROS1) (Homo sapiens (Human)).